Here is a 474-residue protein sequence, read N- to C-terminus: 3-isopropylmalate dehydratase large subunit (474 aa).

The [4Fe-4S] cluster site is built by cysteine 353, cysteine 414, and cysteine 417.

The protein belongs to the aconitase/IPM isomerase family. LeuC type 1 subfamily. In terms of assembly, heterodimer of LeuC and LeuD. [4Fe-4S] cluster serves as cofactor.

It catalyses the reaction (2R,3S)-3-isopropylmalate = (2S)-2-isopropylmalate. Its pathway is amino-acid biosynthesis; L-leucine biosynthesis; L-leucine from 3-methyl-2-oxobutanoate: step 2/4. In terms of biological role, catalyzes the isomerization between 2-isopropylmalate and 3-isopropylmalate, via the formation of 2-isopropylmaleate. The protein is 3-isopropylmalate dehydratase large subunit of Teredinibacter turnerae (strain ATCC 39867 / T7901).